A 291-amino-acid chain; its full sequence is Elongation factor Ts (291 aa).

The tract at residues 79–82 (TDFV) is involved in Mg(2+) ion dislocation from EF-Tu.

It belongs to the EF-Ts family.

The protein resides in the cytoplasm. Associates with the EF-Tu.GDP complex and induces the exchange of GDP to GTP. It remains bound to the aminoacyl-tRNA.EF-Tu.GTP complex up to the GTP hydrolysis stage on the ribosome. In Jannaschia sp. (strain CCS1), this protein is Elongation factor Ts.